Consider the following 628-residue polypeptide: Eukaryotic peptide chain release factor GTP-binding subunit ERF3B (628 aa).

The span at 1 to 10 (MDSGSSSSDS) shows a compositional bias: low complexity. Disordered stretches follow at residues 1 to 49 (MDSG…SAFS), 72 to 124 (FLRG…LEGS), and 146 to 195 (LEES…VIVP). Residues 201-425 (KEHVNVVFIG…YLDNLPNFNR (225 aa)) form the tr-type G domain. Residues 210-217 (GHVDAGKS) are G1. 213–218 (DAGKST) lines the GTP pocket. The tract at residues 266–270 (GKTVE) is G2. The segment at 287-290 (DAPG) is G3. GTP is bound by residues 349–352 (NKMD) and 391–393 (SGL). A G4 region spans residues 349–352 (NKMD). The segment at 391-393 (SGL) is G5.

Belongs to the TRAFAC class translation factor GTPase superfamily. Classic translation factor GTPase family. ERF3 subfamily. As to quaternary structure, component of the eRF1-eRF3-GTP ternary complex, composed of ETF1/ERF1 and ERF3 (GSPT1/ERF3A or GSPT2/ERF3B) and GTP. Component of the transient SURF (SMG1-UPF1-eRF1-eRF3) complex. Interacts with UPF1 and PABPC1. As to expression, highly expressed in IUCC stage II colorectal cancer (CRC).

The protein resides in the cytoplasm. It catalyses the reaction GTP + H2O = GDP + phosphate + H(+). GTPase component of the eRF1-eRF3-GTP ternary complex, a ternary complex that mediates translation termination in response to the termination codons UAA, UAG and UGA. GSPT2/ERF3B mediates ETF1/ERF1 delivery to stop codons: The eRF1-eRF3-GTP complex binds to a stop codon in the ribosomal A-site. GTP hydrolysis by GSPT2/ERF3B induces a conformational change that leads to its dissociation, permitting ETF1/ERF1 to accommodate fully in the A-site. Component of the transient SURF complex which recruits UPF1 to stalled ribosomes in the context of nonsense-mediated decay (NMD) of mRNAs containing premature stop codons. The protein is Eukaryotic peptide chain release factor GTP-binding subunit ERF3B (GSPT2) of Homo sapiens (Human).